A 138-amino-acid polypeptide reads, in one-letter code: Cysteine desulfuration protein SufE (138 aa).

Cysteine 51 acts as the Cysteine persulfide intermediate in catalysis.

This sequence belongs to the SufE family. In terms of assembly, homodimer. Interacts with SufS.

Its subcellular location is the cytoplasm. The protein operates within cofactor biosynthesis; iron-sulfur cluster biosynthesis. Its function is as follows. Participates in cysteine desulfuration mediated by SufS. Cysteine desulfuration mobilizes sulfur from L-cysteine to yield L-alanine and constitutes an essential step in sulfur metabolism for biosynthesis of a variety of sulfur-containing biomolecules. Functions as a sulfur acceptor for SufS, by mediating the direct transfer of the sulfur atom from the S-sulfanylcysteine of SufS, an intermediate product of cysteine desulfuration process. The chain is Cysteine desulfuration protein SufE from Escherichia coli (strain K12 / MC4100 / BW2952).